The sequence spans 74 residues: Conotoxin VxVIA (74 aa).

Positions 1–22 are cleaved as a signal peptide; that stretch reads MKLTCVLIIAVLFLTAYQLATA. Positions 23 to 47 are excised as a propeptide; that stretch reads ASHAKGKQKHRALRPADKHFRFTKR. 3 disulfides stabilise this stretch: C48–C62, C55–C66, and C61–C73.

In terms of tissue distribution, expressed by the venom duct.

It localises to the secreted. In terms of biological role, when injected intracranially in mice, induces a series of symptoms such as quivering, climbing, scratching, barrel rolling and paralysis of limbs. Unexpectedly, no effect is observed on ionic currents when tested on locust DUM neuron. The protein is Conotoxin VxVIA of Conus vexillum (Flag cone).